A 614-amino-acid polypeptide reads, in one-letter code: Probable peptide-binding protein YejA (614 aa).

The first 27 residues, Met-1–Ala-27, serve as a signal peptide directing secretion.

Belongs to the bacterial solute-binding protein 5 family. The complex is composed of one ATP-binding protein (YejF), two transmembrane proteins (YejB and YejE) and a solute-binding protein (YejA).

It is found in the periplasm. Probably part of the ABC transporter complex YejABEF, which is likely involved in broad-spectrum peptide import. The chain is Probable peptide-binding protein YejA from Agrobacterium fabrum (strain C58 / ATCC 33970) (Agrobacterium tumefaciens (strain C58)).